Reading from the N-terminus, the 105-residue chain is Protein E7 (105 aa).

The tract at residues 1–45 is E7 terminal domain; it reads MHGKVPTLQEVILELAPQTEIDLQCNEQLDSSEDEDEDEIDHLLE. Residues 23–27 carry the LXCXE motif; interaction with host RB1 and TMEM173/STING motif; it reads LQCNE. A zinc finger spans residues 65-101; the sequence is CCKCELVVQLDIQSTKEELRVVQQLLMGALTVTCPLC. Residues 83-91 carry the Nuclear export signal motif; the sequence is LRVVQQLLM.

The protein belongs to the papillomaviridae E7 protein family. As to quaternary structure, homodimer. Homooligomer. Interacts with host RB1; this interaction induces dissociation of RB1-E2F1 complex thereby disrupting RB1 activity. Interacts with host EP300; this interaction represses EP300 transcriptional activity. Interacts with protein E2; this interaction inhibits E7 oncogenic activity. Interacts with host TMEM173/STING; this interaction impairs the ability of TMEM173/STING to sense cytosolic DNA and promote the production of type I interferon (IFN-alpha and IFN-beta). Post-translationally, highly phosphorylated.

It is found in the host cytoplasm. The protein localises to the host nucleus. Its function is as follows. Plays a role in viral genome replication by driving entry of quiescent cells into the cell cycle. Stimulation of progression from G1 to S phase allows the virus to efficiently use the cellular DNA replicating machinery to achieve viral genome replication. E7 protein has both transforming and trans-activating activities. Induces the disassembly of the E2F1 transcription factor from RB1, with subsequent transcriptional activation of E2F1-regulated S-phase genes. Interferes with host histone deacetylation mediated by HDAC1 and HDAC2, leading to transcription activation. Also plays a role in the inhibition of both antiviral and antiproliferative functions of host interferon alpha. Interaction with host TMEM173/STING impairs the ability of TMEM173/STING to sense cytosolic DNA and promote the production of type I interferon (IFN-alpha and IFN-beta). The protein is Protein E7 of Homo sapiens (Human).